Here is a 64-residue protein sequence, read N- to C-terminus: Large ribosomal subunit protein bL33 (64 aa).

Belongs to the bacterial ribosomal protein bL33 family.

This chain is Large ribosomal subunit protein bL33, found in Synechococcus sp. (strain JA-2-3B'a(2-13)) (Cyanobacteria bacterium Yellowstone B-Prime).